The sequence spans 121 residues: Small ribosomal subunit protein uS13 (121 aa).

The segment at 93–121 (RHLPVRGQNTKNNARTRKGPAVSIAGKKK) is disordered.

It belongs to the universal ribosomal protein uS13 family. Part of the 30S ribosomal subunit. Forms a loose heterodimer with protein S19. Forms two bridges to the 50S subunit in the 70S ribosome.

Located at the top of the head of the 30S subunit, it contacts several helices of the 16S rRNA. In the 70S ribosome it contacts the 23S rRNA (bridge B1a) and protein L5 of the 50S subunit (bridge B1b), connecting the 2 subunits; these bridges are implicated in subunit movement. Contacts the tRNAs in the A and P-sites. The protein is Small ribosomal subunit protein uS13 of Ligilactobacillus salivarius (strain UCC118) (Lactobacillus salivarius).